A 613-amino-acid polypeptide reads, in one-letter code: Ectonucleoside triphosphate diphosphohydrolase 4 (613 aa).

The Cytoplasmic segment spans residues 1–33; sequence MGRIGISCLFPASWHFSISPVGCPRILNTNLRQ. Residues 34–54 traverse the membrane as a helical segment; that stretch reads IVVISILAAAVSLLYFSVVII. Over 55-559 the chain is Lumenal; sequence RSKYGWLSKD…AGHAHWRGVS (505 aa). The active-site Proton acceptor is Glu222. Cys368 and Cys395 are joined by a disulfide. 2 N-linked (GlcNAc...) asparagine glycosylation sites follow: Asn404 and Asn407. A disulfide bond links Cys461 and Cys490. The chain crosses the membrane as a helical span at residues 560-580; sequence FVYNHYLFSGCFLVVLLSILL. The Cytoplasmic segment spans residues 581-613; the sequence is YLLRLRRIHRRAPRTGSLWMEEGLPSQKGPGPL.

It belongs to the GDA1/CD39 NTPase family. It depends on Ca(2+) as a cofactor. Mg(2+) is required as a cofactor. Ubiquitous.

Its subcellular location is the cytoplasmic vesicle. It localises to the autophagosome membrane. It is found in the lysosome membrane. The protein localises to the golgi apparatus membrane. The enzyme catalyses a ribonucleoside 5'-triphosphate + H2O = a ribonucleoside 5'-diphosphate + phosphate + H(+). It catalyses the reaction a ribonucleoside 5'-diphosphate + H2O = a ribonucleoside 5'-phosphate + phosphate + H(+). It carries out the reaction UDP + H2O = UMP + phosphate + H(+). The catalysed reaction is UTP + H2O = UDP + phosphate + H(+). The enzyme catalyses CTP + H2O = CDP + phosphate + H(+). It catalyses the reaction GDP + H2O = GMP + phosphate + H(+). It carries out the reaction 5-methyl-UTP + H2O = 5-methyl-UDP + phosphate + H(+). Functionally, catalyzes the hydrolysis of nucleoside triphosphates and diphosphates in a calcium- or magnesium-dependent manner, with a preference for pyrimidines. Preferentially hydrolyzes UTP and TTP on UTP and TTP. AMP, ADP, ATP and UMP are not substrates. Preferentially activated by Ca(2+) over Mg(2+). Has a broad substrate specificity with the ability of cleaving all nucleotide di- and triphosphates with the exception of adenosine di- and triphosphate (ADP and ATP). Preferentially hydrolyzes CTP, UDP, CDP, GTP and GDP. Can use either Ca(2+) or Mg(2+) equally. In Mus musculus (Mouse), this protein is Ectonucleoside triphosphate diphosphohydrolase 4 (Entpd4).